A 280-amino-acid chain; its full sequence is F-box only protein 27 (280 aa).

The interval 1 to 26 (MGAWASRGRAARVPAPEPESEPEEAL) is disordered. The F-box domain maps to 25 to 72 (ALDLSQLPPELLLVVLSHVPPRTLLGRCRQVCRGWRALVDGQALWLLI). Residues 100–277 (PCPLGRFCAR…VTNSSVIVRV (178 aa)) enclose the FBA domain.

As to quaternary structure, part of a SCF (SKP1-cullin-F-box) protein ligase complex. Interacts with SKP1 and CUL1.

In terms of biological role, substrate-recognition component of the SCF (SKP1-CUL1-F-box protein)-type E3 ubiquitin ligase complex. Able to recognize and bind complex-type oligosaccharides. In Macaca fascicularis (Crab-eating macaque), this protein is F-box only protein 27 (FBXO27).